The sequence spans 456 residues: Tyrosinase-like protein 2 (456 aa).

A signal peptide spans 1-22 (MNTMALFGKVILLQFLIGVGFC). Cu cation is bound by residues H145, H154, H163, H295, H299, and H322.

Cu(2+) serves as cofactor. Prismatic layer of shell (at protein level).

Its subcellular location is the secreted. The sequence is that of Tyrosinase-like protein 2 from Margaritifera margaritifera (Freshwater pearl mussel).